The primary structure comprises 235 residues: UPF0758 protein CD630_11440 (235 aa).

The region spanning 113–235 (KIMNPWDIQR…YFSFKENMII (123 aa)) is the MPN domain. Zn(2+) contacts are provided by His184, His186, and Asp197. Positions 184–197 (HNHPSGSVEPSRED) match the JAMM motif motif.

It belongs to the UPF0758 family.

The chain is UPF0758 protein CD630_11440 from Clostridioides difficile (strain 630) (Peptoclostridium difficile).